The primary structure comprises 983 residues: Nuclear factor NF-kappa-B p105 subunit (983 aa).

In terms of domain architecture, RHD spans 47 to 372 (PYLQIIEQPK…EVQRKRQKLM (326 aa)). S-nitrosocysteine is present on cysteine 66. Serine 342 carries the phosphoserine; by PKA modification. A Nuclear localization signal motif is present at residues 365-370 (QRKRQK). Positions 377 to 397 (DGYGGGSGAGGGGMFGGGGGG) are GRR. The segment at 423–454 (KSNAGMKHELSNSTVKKDEESSDKQSDKWDTK) is disordered. Basic and acidic residues predominate over residues 428-454 (MKHELSNSTVKKDEESSDKQSDKWDTK). ANK repeat units follow at residues 540 to 569 (NGDN…DMNY), 579 to 608 (LYQT…NVNL), 612 to 641 (HGNS…ASSM), 648 to 677 (EGLS…DVNA), 682 to 712 (SGRT…DVDS), 716 to 745 (DGTT…DPHV), and 769 to 799 (PGTT…AVSE). In terms of domain architecture, Death spans 804–891 (QGPLRELNES…EAIEVIQKAL (88 aa)). Position 938 is a phosphoserine (serine 938).

In terms of assembly, active NF-kappa-B is a heterodimer of an about 50 kDa DNA-binding subunit and the weak DNA-binding subunit p65. Two heterodimers might form a labile tetramer. In terms of processing, generation of the NF-kappa-B p50 (Nuclear factor NF-kappa-B p50 subunit) transcription factor takes place both cotranslationally and post-translationally via non-mutually exclusive mechanisms. A cotranslational processing allows the production of both p50 and p105 (Nuclear factor NF-kappa-B p105 subunit) from a single NFKB1 mRNA. While translation occurs, the particular unfolded structure after the GRR repeat region acts as a substrate for the proteasome, promoting degradation of the C-terminus. The GRR acts as a proteasomal 'stop signal', protecting the region upstream of the GRR from degradation and promoting generation of p50. It is unclear if limited proteasome degradation during cotranslational processing depends on ubiquitination. NF-kappa-B p50 is also generated post-translationally following ubiquitination by the KPC complex, leading to limited processing by the proteasome downstream of the GRR region, thereby generating p50. Post-translationally, phosphorylation at the C-terminus by IKBKB/IKKB acts as a signal for ubiquitination and promotes either complete degradation or processing to generate the NF-kappa-B p50 (Nuclear factor NF-kappa-B p50 subunit). Phosphorylation at Ser-938 are required for BTRC/BTRCP-mediated ubiquitination and proteolysis. Phosphorylation at Ser-938 is also required for ubiquitination by the KPC complex and limited processing to generate NF-kappa-B p50 (Nuclear factor NF-kappa-B p50 subunit). Polyubiquitinated at multiple Lys residues in the C-terminus. Polyubiquitinated by the SCF(FBXW11) and SCF(BTRC) complexes following phosphorylation at Ser-938, leading to its complete degradation. In contrast, polyubiquitination by the KPC complex following phosphorylation at Ser-938 leads to limited proteosomal processing and generation of the active NF-kappa-B p50 (Nuclear factor NF-kappa-B p50 subunit). In terms of processing, S-nitrosylation of Cys-66 affects DNA binding. Post-translationally, the covalent modification of cysteine by 15-deoxy-Delta12,14-prostaglandin-J2 is autocatalytic and reversible. It may occur as an alternative to other cysteine modifications, such as S-nitrosylation and S-palmitoylation.

The protein localises to the cytoplasm. Its subcellular location is the nucleus. P105 is the precursor of the active p50 subunit (Nuclear factor NF-kappa-B p50 subunit) of the nuclear factor NF-kappa-B. The precursor protein itself does not bind to DNA. Acts as a cytoplasmic retention of attached NF-kappa-B proteins by p105. In terms of biological role, constitutes the active form, which associates with RELA/p65 to form the NF-kappa-B p65-p50 complex to form a transcription factor. Together with RELA/p65, binds to the kappa-B consensus sequence 5'-GGRNNYYCC-3', located in the enhancer region of genes involved in immune response and acute phase reactions. The chain is Nuclear factor NF-kappa-B p105 subunit (NFKB1) from Gallus gallus (Chicken).